Here is a 200-residue protein sequence, read N- to C-terminus: Transcription elongation factor A protein-like 3 (200 aa).

A compositionally biased stretch (basic and acidic residues) spans 1 to 19 (MEEVRGENEGKLEKEGKPE). The segment at 1–200 (MEEVRGENEG…QRGLHDIPYL (200 aa)) is disordered. Residues 20-34 (DEVEPEDEEKSDEDE) are compositionally biased toward acidic residues. A Phosphoserine modification is found at Ser-30. Basic and acidic residues-rich tracts occupy residues 47–85 (GKPEEEAKPDEQGQDEGKPEKQGKSDGEGKRQGESKPDS), 94–106 (RAAEKRPAEDYVP), and 114–153 (DRGTDDSPKNSQEDLQDRHVSSEEMMRECADMTRAQEELR).

It belongs to the TFS-II family. TFA subfamily.

The protein resides in the nucleus. In terms of biological role, may be involved in transcriptional regulation. The polypeptide is Transcription elongation factor A protein-like 3 (Tceal3) (Mus musculus (Mouse)).